Reading from the N-terminus, the 234-residue chain is Uridylate kinase (234 aa).

9 to 12 is a binding site for ATP; the sequence is KLSG. Residue Gly51 coordinates UMP. ATP contacts are provided by Gly52 and Arg56. UMP is bound by residues Asp71 and 132-139; that span reads CGNPFFTT. Thr159, Tyr165, and Asp168 together coordinate ATP.

The protein belongs to the UMP kinase family. In terms of assembly, homohexamer.

Its subcellular location is the cytoplasm. The catalysed reaction is UMP + ATP = UDP + ADP. It functions in the pathway pyrimidine metabolism; CTP biosynthesis via de novo pathway; UDP from UMP (UMPK route): step 1/1. Its activity is regulated as follows. Inhibited by UTP. Its function is as follows. Catalyzes the reversible phosphorylation of UMP to UDP. This Prochlorococcus marinus (strain MIT 9301) protein is Uridylate kinase.